Consider the following 550-residue polypeptide: Hydroxylamine reductase (550 aa).

The [2Fe-2S] cluster site is built by Cys4, Cys7, Cys19, and Cys26. His249, Glu273, Cys317, Cys405, Cys433, Cys458, Glu492, and Lys494 together coordinate hybrid [4Fe-2O-2S] cluster. The residue at position 405 (Cys405) is a Cysteine persulfide.

It belongs to the HCP family. It depends on [2Fe-2S] cluster as a cofactor. The cofactor is hybrid [4Fe-2O-2S] cluster.

The protein resides in the cytoplasm. The catalysed reaction is A + NH4(+) + H2O = hydroxylamine + AH2 + H(+). Catalyzes the reduction of hydroxylamine to form NH(3) and H(2)O. The chain is Hydroxylamine reductase from Aeromonas salmonicida (strain A449).